Here is a 645-residue protein sequence, read N- to C-terminus: Threonine--tRNA ligase (645 aa).

Positions 1–63 (MEQINIQFPD…ETDGSIGIVT (63 aa)) constitute a TGS domain. The tract at residues 242–540 (DHRKIGKELE…LTEETKGAFP (299 aa)) is catalytic. Zn(2+)-binding residues include cysteine 336, histidine 387, and histidine 517.

It belongs to the class-II aminoacyl-tRNA synthetase family. Homodimer. Requires Zn(2+) as cofactor.

The protein resides in the cytoplasm. The enzyme catalyses tRNA(Thr) + L-threonine + ATP = L-threonyl-tRNA(Thr) + AMP + diphosphate + H(+). Functionally, catalyzes the attachment of threonine to tRNA(Thr) in a two-step reaction: L-threonine is first activated by ATP to form Thr-AMP and then transferred to the acceptor end of tRNA(Thr). Also edits incorrectly charged L-seryl-tRNA(Thr). In Staphylococcus aureus (strain Mu3 / ATCC 700698), this protein is Threonine--tRNA ligase.